The following is a 473-amino-acid chain: Notchless protein homolog (473 aa).

The tract at residues 9–91 is ubiquitin-like (UBL) domain; it reads GKTVMCLLTD…VLTIVYQQQA (83 aa). WD repeat units follow at residues 107-146, 149-188, 192-236, 239-277, 313-354, 358-399, 400-439, and 442-473; these read GHAE…PLFT, GHKN…LEGS, GHKK…SIIC, GHTL…LIRE, EKQK…QPKK, GHQQ…TVFR, GHVG…LKQD, and GHAD…LWKG. Residues 417–432 carry the DWD box motif; that stretch reads LLSGSKDSTLKIWEIR.

The protein belongs to the NLE1/RSA4 family. Associates with the pre-60S ribosomal particle. Constitutively and ubiquitously expressed.

It is found in the nucleus. The protein localises to the nucleolus. Its function is as follows. Required for female gametophyte development. This chain is Notchless protein homolog, found in Arabidopsis thaliana (Mouse-ear cress).